The following is a 520-amino-acid chain: MEISYGRALYRNFLGQSPDWYKLCLLGFLILNPLVFWVSPFTAGWLLVIEFIFTLAMALKCYPLLPGGLLAVEALFIGMTSAEHVREEVANNLAVVLLLIFMVAGIYFMKQLLLLIFTRLLLGIRSKTLLSLAFCFAAAFLSAFLDALTVVAVVISVAVGFYGIYHRVASNRDEGQELVDDAQLDDERRATLERFRAFLRSLMMHAGVGTALGGVMTMVGEPQNLIIAHAAGWSFGDFLLRVAPVSVPVFICGIVTCILVEKTKSFGYGEPLPEPVRKILREYDDKSRQKRTRQDTMKLIIQGLIGVWLITALALHLAEVGLIGLSVIILASSLCGVTDEHAIGKAFTEALPFTALLTVFFAVVAVIIDQHLFAPIIAYVLEASPHNQLSLFYLFNGLLSSISDNVFVGTVYINEAKSALQQGVIDAKQFEMLAVAINTGTNLPSVATPNGQAAFLFLLTSALAPLIRLSYGRMVWMALPYTIVLTLVGLACVQFTLVPFTDWLLQSGWVSTPATTALLH.

12 helical membrane passes run 27 to 49 (GFLI…LLVI), 62 to 82 (YPLL…MTSA), 97 to 117 (LLLI…LLIF), 120 to 140 (LLLG…AAAF), 144 to 164 (FLDA…FYGI), 202 to 222 (LMMH…VGEP), 238 to 258 (FLLR…VTCI), 303 to 323 (GLIG…VGLI), 348 to 368 (TEAL…AVII), 391 to 411 (LFYL…VGTV), 447 to 467 (ATPN…APLI), and 475 to 495 (VWMA…CVQF).

It belongs to the NhaB Na(+)/H(+) (TC 2.A.34) antiporter family.

It localises to the cell inner membrane. The catalysed reaction is 2 Na(+)(in) + 3 H(+)(out) = 2 Na(+)(out) + 3 H(+)(in). In terms of biological role, na(+)/H(+) antiporter that extrudes sodium in exchange for external protons. The polypeptide is Na(+)/H(+) antiporter NhaB (Cronobacter sakazakii (strain ATCC BAA-894) (Enterobacter sakazakii)).